A 155-amino-acid polypeptide reads, in one-letter code: Peptide methionine sulfoxide reductase MsrB (155 aa).

One can recognise a MsrB domain in the interval 15-137; sequence REALIATLNA…NSVSLTFIPT (123 aa). 4 residues coordinate Zn(2+): Cys-54, Cys-57, Cys-103, and Cys-106. Cys-126 (nucleophile) is an active-site residue.

This sequence belongs to the MsrB Met sulfoxide reductase family. The cofactor is Zn(2+).

The enzyme catalyses L-methionyl-[protein] + [thioredoxin]-disulfide + H2O = L-methionyl-(R)-S-oxide-[protein] + [thioredoxin]-dithiol. The polypeptide is Peptide methionine sulfoxide reductase MsrB (Xylella fastidiosa (strain M23)).